Reading from the N-terminus, the 546-residue chain is Probable acyl-activating enzyme 21 (546 aa).

This sequence belongs to the ATP-dependent AMP-binding enzyme family.

Functionally, may act as an acid--thiol ligase that activates carboxylic acids by forming acyl-CoAs. This Arabidopsis thaliana (Mouse-ear cress) protein is Probable acyl-activating enzyme 21 (AEE21).